Reading from the N-terminus, the 214-residue chain is Riboflavin kinase (214 aa).

The segment at 1 to 91 (MRSIMEVETL…YCSIFEDGGA (91 aa)) is H-T-H motif-like. Positions 92-214 (PVMRGKVVTG…DGDEVEVTLE (123 aa)) are riboflavin kinase. Residue 101-106 (GLGEGQ) participates in CDP binding. Residues T130 and N132 each contribute to the Mg(2+) site. T182 and E190 together coordinate FMN. 195-198 (IKLR) contacts CDP.

Belongs to the archaeal riboflavin kinase family. Mg(2+) serves as cofactor.

The catalysed reaction is riboflavin + CTP = CDP + FMN + H(+). The protein operates within cofactor biosynthesis; FMN biosynthesis; FMN from riboflavin (CTP route): step 1/1. Functionally, catalyzes the CTP-dependent phosphorylation of riboflavin (vitamin B2) to form flavin mononucleotide (FMN). This is Riboflavin kinase (ribK) from Methanocella arvoryzae (strain DSM 22066 / NBRC 105507 / MRE50).